Here is a 233-residue protein sequence, read N- to C-terminus: MIVFILLSFAAVLQQSFGRIDIDSQSTRRPEIQNLIVDTHNSYRRSVSPTATNMLKMEWYPEAAANAERWAYQCVYDHSQKYERVLDGIQCGENIYMYSEFRPWTEVMQSWYDEYRNFIFGVGAHPANALIGHYTQIVWYKSYRVGCAIANCPSYPYNYFYVCQYCPAGNFGGQTATPYNSGTTCADCPSACDNGLCTNPCTSENVFTNCNDMVKESGCQDERMKSICPASCF.

The first 18 residues, 1-18 (MIVFILLSFAAVLQQSFG), serve as a signal peptide directing secretion. Residues 37-165 (VDTHNSYRRS…PYNYFYVCQY (129 aa)) form the SCP domain. 7 disulfide bridges follow: Cys-74-Cys-152, Cys-91-Cys-166, Cys-147-Cys-163, Cys-185-Cys-192, Cys-188-Cys-197, Cys-210-Cys-228, and Cys-219-Cys-232. The ShKT domain occupies 201–233 (CTSENVFTNCNDMVKESGCQDERMKSICPASCF).

Belongs to the CRISP family. As to expression, expressed by the venom gland.

Its subcellular location is the secreted. In terms of biological role, blocks contraction of smooth muscle elicited by high potassium-induced depolarization, but does not block caffeine-stimulated contraction. May target voltage-gated calcium channels on smooth muscle. The protein is Cysteine-rich venom protein LIO1 of Erythrolamprus poecilogyrus (Water snake).